Consider the following 473-residue polypeptide: Thermostable beta-glucosidase B (473 aa).

Residue glutamate 196 is the Proton donor of the active site. Catalysis depends on glutamate 378, which acts as the Nucleophile.

Belongs to the glycosyl hydrolase 1 family.

The protein localises to the cytoplasm. The catalysed reaction is Hydrolysis of terminal, non-reducing beta-D-glucosyl residues with release of beta-D-glucose.. This is Thermostable beta-glucosidase B (bglB) from Thermobispora bispora (Microbispora bispora).